Consider the following 212-residue polypeptide: uncharacterized protein (212 aa).

Residues G53, E74, and D97 each coordinate S-adenosyl-L-methionine.

It belongs to the methyltransferase superfamily. YrrT family.

In terms of biological role, could be a S-adenosyl-L-methionine-dependent methyltransferase. This is an uncharacterized protein from Bacillus cytotoxicus (strain DSM 22905 / CIP 110041 / 391-98 / NVH 391-98).